Reading from the N-terminus, the 229-residue chain is ATP-dependent Clp protease proteolytic subunit 1 (229 aa).

Residue Ser129 is the Nucleophile of the active site. His154 is a catalytic residue.

The protein belongs to the peptidase S14 family. As to quaternary structure, fourteen ClpP subunits assemble into 2 heptameric rings which stack back to back to give a disk-like structure with a central cavity, resembling the structure of eukaryotic proteasomes.

Its subcellular location is the cytoplasm. It carries out the reaction Hydrolysis of proteins to small peptides in the presence of ATP and magnesium. alpha-casein is the usual test substrate. In the absence of ATP, only oligopeptides shorter than five residues are hydrolyzed (such as succinyl-Leu-Tyr-|-NHMec, and Leu-Tyr-Leu-|-Tyr-Trp, in which cleavage of the -Tyr-|-Leu- and -Tyr-|-Trp bonds also occurs).. Cleaves peptides in various proteins in a process that requires ATP hydrolysis. Has a chymotrypsin-like activity. Plays a major role in the degradation of misfolded proteins. The chain is ATP-dependent Clp protease proteolytic subunit 1 from Thermosynechococcus vestitus (strain NIES-2133 / IAM M-273 / BP-1).